The sequence spans 129 residues: M-zodatoxin-Lt8a (129 aa).

The first 20 residues, 1 to 20 (MKYFVVALALVAAFACIAES), serve as a signal peptide directing secretion. A propeptide spanning residues 21 to 60 (KPAESEHELAEVEEENELADLEDAVWLEHLADLSDLEEAR) is cleaved from the precursor. Residues 57–60 (EEAR) carry the Processing quadruplet motif motif.

The protein belongs to the cationic peptide 06 (cytoinsectotoxin) family. Post-translationally, cleavage of the propeptide depends on the processing quadruplet motif (XXXR, with at least one of X being E). In terms of tissue distribution, expressed by the venom gland.

Its subcellular location is the secreted. In terms of biological role, insecticidal, cytolytic and antimicrobial peptide. Has insecticidal activity against the flesh fly S.carnaria, and against the cockroach N.cinerea. Has insecticidal activity against D.melanogaster. Has hemolytic activity against human erythrocytes (EC(50)=6 uM). Has cytolytic activity against insect Sf9 cells (EC(50)=1 uM) and human leukocytes (EC(50)=3 uM). Has antibacterial activity against the Gram-positive bacteria A.globiformis VKM Ac-1112 (MIC=0.5 uM), and B.subtilis VKM B-501 (MIC=0.6-0.9 uM), and against the Gram-negative bacteria E.coli C600 (MIC=0.5 uM), E.coli DH5alpha (MIC=0.9 uM), E.coli MH1 (MIC=0.5 uM), P.aeruginosa PAO1 (MIC=1.9 uM), and P.fluorescens VKM B-894 (MIC=3.8 uM). Lacks antimicrobial activity against the Gram-positive bacteria M.luteus and S.aureus, and against the Gram-negative bacterium S.marcescens. Forms voltage-dependent, ion-permeable channels in membranes. At high concentration causes cell membrane lysis. In Lachesana tarabaevi (Spider), this protein is M-zodatoxin-Lt8a (cit 1-1).